We begin with the raw amino-acid sequence, 350 residues long: Protein RecA (350 aa).

67–74 (GPESSGKT) is a binding site for ATP.

This sequence belongs to the RecA family.

It is found in the cytoplasm. Functionally, can catalyze the hydrolysis of ATP in the presence of single-stranded DNA, the ATP-dependent uptake of single-stranded DNA by duplex DNA, and the ATP-dependent hybridization of homologous single-stranded DNAs. It interacts with LexA causing its activation and leading to its autocatalytic cleavage. This chain is Protein RecA, found in Mycobacterium avium (strain 104).